Here is a 185-residue protein sequence, read N- to C-terminus: Probable prefoldin subunit 3 (185 aa).

Belongs to the prefoldin subunit alpha family. As to quaternary structure, heterohexamer of two PFD-alpha type and four PFD-beta type subunits.

In terms of biological role, binds specifically to cytosolic chaperonin (c-CPN) and transfers target proteins to it. Binds to nascent polypeptide chain and promotes folding in an environment in which there are many competing pathways for nonnative proteins. In Caenorhabditis elegans, this protein is Probable prefoldin subunit 3 (pfd-3).